The chain runs to 2417 residues: Protein pad-1 (2417 aa).

4 disordered regions span residues 409–437, 449–475, 994–1029, and 1957–2032; these read SSNS…DREG, SNKD…PDEE, TSTG…DDDT, and SMSN…RRDP. Low complexity-rich tracts occupy residues 456–468 and 1002–1024; these read TSVT…NASS and DPSA…VVPA. Positions 1969–1982 are enriched in polar residues; the sequence is DNPSGSTRNSTLSL. Residues 2003-2014 show a composition bias toward basic and acidic residues; the sequence is SKSENMKIEKKS. The span at 2015–2025 shows a compositional bias: polar residues; that stretch reads SSNLRASIKDT.

Belongs to the DOP1 family.

In terms of biological role, may be involved in protein traffic between late Golgi and early endosomes. Essential for cell patterning during gastrulation. The polypeptide is Protein pad-1 (pad-1) (Caenorhabditis elegans).